The following is a 472-amino-acid chain: MLRVGPLTIGTLDDWAPSTGSTVSWRPSAVAHTKASQAPISDVPVSYMQAQHIRGYCEQKAKGLDYSRLMVVSCQQPGQCDIRAANYVINAHLRRHDTYRSWFQYNGNGQIIRRTIQDPADIEFVPVHHGELTLPQIREIVQNTPDPLQWGCFRFGIVQGCDHFTFFASVDHVHVDAMIVGVTLMEFHLMYAALVGGHAPLELPPAGSYDDFCRRQHTFSSTLTVESPQVRAWTKFAEGTNGSFPDFPLPLGDPSKPSDADIVTVMMLDEEQTAQFESVCTAAGARFIGGVLACCGLAEHELTGTTTYYGLTPRDTRRTPADAMTQGWFTGLIPITVPIAGSAFGDAARAAQTSFDSGVKLAEVPYDRVVELSSTLTMPRPNFPVVNFLDAGAAPLSVLLTAELTGTNIGVYSDGRYSYQLSIYVIRVEQGTAVAVMFPDNPIARESVARYLATLKSVFQRVAESGQQQNVA.

It belongs to the PapA acyltransferase family.

The enzyme catalyses a long-chain fatty acyl-CoA + alpha,alpha-trehalose = a 2-O-(long-chain fatty acyl)-alpha,alpha-trehalose + CoA. The catalysed reaction is a mycolipenoyl-CoA + a 2-O-(long-chain fatty acyl)-alpha,alpha-trehalose = a 2-O-(long-chain fatty acyl)-3-O-mycolipenoyl-trehalose + CoA. It catalyses the reaction alpha,alpha-trehalose + hexadecanoyl-CoA = 2-O-hexadecanoyl-alpha,alpha-trehalose + CoA. It carries out the reaction 2-O-hexadecanoyl-alpha,alpha-trehalose + hexadecanoyl-CoA = 2-O,3-O-dihexadecanoyl-alpha,alpha-trehalose + CoA. Involved in the biosynthesis of polyacyltrehalose (PAT), a pentaacylated, trehalose-based glycolipid that could have a role in anchoring the bacterial capsule. Catalyzes the sequential transfer of two palmitoyl groups onto a single glucose residue of trehalose generating the diacylated product 2,3-diacyltrehalose (trehalose dipalmitate). This chain is Acyltransferase PapA3 (papA3), found in Mycobacterium tuberculosis (strain CDC 1551 / Oshkosh).